A 208-amino-acid polypeptide reads, in one-letter code: Uracil phosphoribosyltransferase (208 aa).

5-phospho-alpha-D-ribose 1-diphosphate is bound by residues Arg-78, Arg-103, and 130 to 138 (DPMLATANS). Uracil is bound by residues Ile-193 and 198 to 200 (GDA). Residue Asp-199 participates in 5-phospho-alpha-D-ribose 1-diphosphate binding.

It belongs to the UPRTase family. Requires Mg(2+) as cofactor.

It carries out the reaction UMP + diphosphate = 5-phospho-alpha-D-ribose 1-diphosphate + uracil. It participates in pyrimidine metabolism; UMP biosynthesis via salvage pathway; UMP from uracil: step 1/1. With respect to regulation, allosterically activated by GTP. Catalyzes the conversion of uracil and 5-phospho-alpha-D-ribose 1-diphosphate (PRPP) to UMP and diphosphate. In Brucella melitensis biotype 2 (strain ATCC 23457), this protein is Uracil phosphoribosyltransferase.